The sequence spans 502 residues: UPF0371 protein CTC_00401 (502 aa).

The protein belongs to the UPF0371 family.

The polypeptide is UPF0371 protein CTC_00401 (Clostridium tetani (strain Massachusetts / E88)).